A 394-amino-acid chain; its full sequence is MLAQLPPALQSLHLPLRLKLWDGNQFDLGPSPQVTILVKEPQLIGQLTHPSMEQLGTAFVEGKLELEGDIGEAIRVCDELSEALFTDEDEQPPERRSHDKRTDAEAISYHYDVSNAFYQLWLDQDMAYSCAYFREPDNTLDQAQQDKFDHLCRKLRLNAGDYLLDVGCGWGGLARFAAREYDAKVFGITLSKEQLKLGRQRVKAEGLTDKVDLQILDYRDLPQDGRFDKVVSVGMFEHVGHANLALYCQKLFGAVREGGLVMNHGITAKHVDGRPVGRGAGEFIDRYVFPHGELPHLSMISASICEAGLEVVDVESLRLHYAKTLHHWSENLENQLHKAAALVPEKTLRIWRLYLAGCAYAFEKGWINLHQILAVKPYADGHHDLPWTREDMYR.

S-adenosyl-L-methionine-binding positions include 128–129 (YS), 163–171 (LLDVGCGWG), and 189–194 (TLSKEQ). The active site involves C358.

Belongs to the CFA/CMAS family.

This is Probable fatty acid methyltransferase from Pseudomonas putida (Arthrobacter siderocapsulatus).